A 288-amino-acid chain; its full sequence is MIDLVFDARRKDLGNFEVGRVLPFHAHRMVGPFTFLDHMGPAAFQPGFPKSADVRPHPHIGLSTLTYLFEGEITHRDSVGSLAVIKPHEVNWMTAGSGITHSERFEGLREHGGRMDGMQAWVALPTEFEEIDPSFTHHEGPAELPYYENGGLKARLIAGEAFGAKSSVPVYSPLFYVHWELEPGVTAALPAEYPERAAYIAAGRVEVDGRELVEAQMAVFAPGETVVFKALERSTVMLLGGEPVGPRFIEWNFVSSSKDRIEQAKADWKAGRMKLPDLDHGEFIPLPE.

It belongs to the pirin family.

The chain is Pirin-like protein CC_3178 from Caulobacter vibrioides (strain ATCC 19089 / CIP 103742 / CB 15) (Caulobacter crescentus).